The primary structure comprises 293 residues: HTH-type transcriptional regulator HdfR (293 aa).

In terms of domain architecture, HTH lysR-type spans 1 to 58 (MDTELLKTFLEVSRTRHFGRAAESLYLTQSAVSFRIRQLENQLGANLFTRHRNNIRLT). The H-T-H motif DNA-binding region spans 18–37 (FGRAAESLYLTQSAVSFRIR).

It belongs to the LysR transcriptional regulatory family.

Its function is as follows. Negatively regulates the transcription of the flagellar master operon flhDC by binding to the upstream region of the operon. This is HTH-type transcriptional regulator HdfR from Yersinia enterocolitica serotype O:8 / biotype 1B (strain NCTC 13174 / 8081).